The sequence spans 91 residues: Large ribosomal subunit protein bL31B-1 (91 aa).

It belongs to the bacterial ribosomal protein bL31 family. Type B subfamily. In terms of assembly, part of the 50S ribosomal subunit.

The sequence is that of Large ribosomal subunit protein bL31B-1 from Streptomyces avermitilis (strain ATCC 31267 / DSM 46492 / JCM 5070 / NBRC 14893 / NCIMB 12804 / NRRL 8165 / MA-4680).